Reading from the N-terminus, the 381-residue chain is Transcriptional regulatory protein FlgR (381 aa).

The Response regulatory domain maps to 2-113; that stretch reads KIAIVEDDIN…LLLESIYRTK (112 aa). Aspartate 51 bears the 4-aspartylphosphate mark. Residues 136 to 365 enclose the Sigma-54 factor interaction domain; it reads FLAASKALEE…LLGVVERAAI (230 aa). Residues 164–171 and 227–236 contribute to the ATP site; these read GESGVGKE and ANKGTIFLDE.

Post-translationally, phosphorylated by FlgS.

Its function is as follows. Member of the two-component regulatory system FlgR/FlgS that induces the transcriptional induction of the genes needed in motility and flagellar biogenesis. Upon phosphorylation by FlgS, functions as a transcriptional regulator and activates transcription of RpoN-dependent flagellar genes. The polypeptide is Transcriptional regulatory protein FlgR (flgR) (Helicobacter pylori (strain ATCC 700392 / 26695) (Campylobacter pylori)).